The primary structure comprises 172 residues: MSFLPQVMGAGVGFNAGTMLFQLVAMLILLALLKKYALGPLLNIMKEREDYITGEISSAEKKNEEAKKLIEEQQALLKEAREESQSLIENAKKLGEQQKDEIIKAARQEAERMKESARSEIVKERDQAVTALREQVASLSVMIASKVIEKELDEQAQEKLIQDYLKEVGESR.

Residues V12–L32 traverse the membrane as a helical segment.

Belongs to the ATPase B chain family. In terms of assembly, F-type ATPases have 2 components, F(1) - the catalytic core - and F(0) - the membrane proton channel. F(1) has five subunits: alpha(3), beta(3), gamma(1), delta(1), epsilon(1). F(0) has three main subunits: a(1), b(2) and c(10-14). The alpha and beta chains form an alternating ring which encloses part of the gamma chain. F(1) is attached to F(0) by a central stalk formed by the gamma and epsilon chains, while a peripheral stalk is formed by the delta and b chains.

It is found in the cell membrane. F(1)F(0) ATP synthase produces ATP from ADP in the presence of a proton or sodium gradient. F-type ATPases consist of two structural domains, F(1) containing the extramembraneous catalytic core and F(0) containing the membrane proton channel, linked together by a central stalk and a peripheral stalk. During catalysis, ATP synthesis in the catalytic domain of F(1) is coupled via a rotary mechanism of the central stalk subunits to proton translocation. Its function is as follows. Component of the F(0) channel, it forms part of the peripheral stalk, linking F(1) to F(0). This chain is ATP synthase subunit b, found in Bacillus licheniformis (strain ATCC 14580 / DSM 13 / JCM 2505 / CCUG 7422 / NBRC 12200 / NCIMB 9375 / NCTC 10341 / NRRL NRS-1264 / Gibson 46).